The following is a 388-amino-acid chain: Probable Na(+)/H(+) antiporter 3 (388 aa).

Helical transmembrane passes span 2–22 (ESYY…PNLL), 27–47 (IPAI…GLNI), 53–73 (TLKI…GLEV), 81–101 (EFKN…VGGY), 102–122 (LIGQ…VIFA), 146–166 (IILS…SVVI), 175–195 (VGTF…AIPS), 215–235 (VLFI…HPIV), 263–283 (AIGY…ETNI), 294–314 (LLLI…FIAL), 325–345 (TIGG…ASIG), and 354–374 (EIFV…PIVV).

This sequence belongs to the monovalent cation:proton antiporter 1 (CPA1) transporter (TC 2.A.36) family.

Its subcellular location is the cell membrane. This is probably a Na(+)/H(+) antiporter. The sequence is that of Probable Na(+)/H(+) antiporter 3 from Methanocaldococcus jannaschii (strain ATCC 43067 / DSM 2661 / JAL-1 / JCM 10045 / NBRC 100440) (Methanococcus jannaschii).